The chain runs to 462 residues: Cytochrome P450 20A1 (462 aa).

Residues 4–24 (FAIFAVTFLLALVGAVLYLYP) form a helical membrane-spanning segment. C409 contributes to the heme binding site.

It belongs to the cytochrome P450 family. Heme is required as a cofactor.

It is found in the membrane. This is Cytochrome P450 20A1 (CYP20A1) from Homo sapiens (Human).